The sequence spans 470 residues: Acetyl-CoA decarbonylase/synthase complex subunit beta 2 (470 aa).

4 residues coordinate [Ni-Fe-S] cluster: Cys190, Cys193, Cys279, and Cys281.

The protein belongs to the CdhC family. In terms of assembly, monomer. The ACDS complex is made up of alpha, epsilon, beta, gamma and delta chains with a probable stoichiometry of (alpha(2)epsilon(2))(4)-beta(8)-(gamma(1)delta(1))(8) (Potential). The cofactor is [Ni-Fe-S] cluster.

It carries out the reaction Co(I)-[corrinoid Fe-S protein] + acetyl-CoA + H(+) = methyl-Co(III)-[corrinoid Fe-S protein] + CO + CoA. It functions in the pathway one-carbon metabolism; methanogenesis from acetate. Its function is as follows. Part of a complex that catalyzes the reversible cleavage of acetyl-CoA, allowing growth on acetate as sole source of carbon and energy. The alpha-epsilon complex generates CO from CO(2), while the beta subunit (this protein) combines the CO with CoA and a methyl group to form acetyl-CoA. The methyl group, which is incorporated into acetyl-CoA, is transferred to the beta subunit by a corrinoid iron-sulfur protein (the gamma-delta complex). The polypeptide is Acetyl-CoA decarbonylase/synthase complex subunit beta 2 (cdhC2) (Methanosarcina mazei (strain ATCC BAA-159 / DSM 3647 / Goe1 / Go1 / JCM 11833 / OCM 88) (Methanosarcina frisia)).